We begin with the raw amino-acid sequence, 538 residues long: Probable folate-biopterin transporter 9, chloroplastic (538 aa).

The N-terminal 57 residues, 1–57 (MNNPLLSISNPVKFFKPPIPYRISLNTTINKKQKHQSKTLVVKSNKRSTTSLTSSVS), are a transit peptide targeting the chloroplast. Transmembrane regions (helical) follow at residues 85-105 (VLLC…WLAL), 129-149 (LPMV…IGGA), 152-172 (VPYI…LAIF), 178-198 (VLPS…ITEV), 220-240 (ALMA…YCLL), 246-266 (ILFL…LSSK), 309-329 (LIWI…VFCY), 339-359 (SVIG…TVVY), 370-390 (ALIH…YILV), 395-415 (LAFG…AEIL), 447-467 (LCLS…MIGI), and 479-499 (ILIQ…VPML).

It belongs to the major facilitator superfamily. Folate-biopterin transporter (TC 2.A.71) family.

The protein resides in the plastid. It is found in the chloroplast membrane. Its function is as follows. Could mediate folate transport. The sequence is that of Probable folate-biopterin transporter 9, chloroplastic from Arabidopsis thaliana (Mouse-ear cress).